Reading from the N-terminus, the 332-residue chain is 2,3-diketo-L-gulonate reductase (332 aa).

His44 acts as the Proton donor in catalysis. NAD(+)-binding positions include 168 to 174, 224 to 225, and 304 to 306; these read ITMVDMS, WK, and GHE.

Belongs to the LDH2/MDH2 oxidoreductase family. DlgD subfamily. As to quaternary structure, homodimer.

It is found in the cytoplasm. The catalysed reaction is 3-dehydro-L-gulonate + NAD(+) = 2,3-dioxo-L-gulonate + NADH + H(+). The enzyme catalyses 3-dehydro-L-gulonate + NADP(+) = 2,3-dioxo-L-gulonate + NADPH + H(+). Catalyzes the reduction of 2,3-diketo-L-gulonate in the presence of NADH, to form 3-keto-L-gulonate. The chain is 2,3-diketo-L-gulonate reductase from Escherichia coli O6:K15:H31 (strain 536 / UPEC).